The primary structure comprises 349 residues: Phosphate acyltransferase (349 aa).

Belongs to the PlsX family. As to quaternary structure, homodimer. Probably interacts with PlsY.

It localises to the cytoplasm. The enzyme catalyses a fatty acyl-[ACP] + phosphate = an acyl phosphate + holo-[ACP]. It participates in lipid metabolism; phospholipid metabolism. Catalyzes the reversible formation of acyl-phosphate (acyl-PO(4)) from acyl-[acyl-carrier-protein] (acyl-ACP). This enzyme utilizes acyl-ACP as fatty acyl donor, but not acyl-CoA. In Rhodopseudomonas palustris (strain BisA53), this protein is Phosphate acyltransferase.